We begin with the raw amino-acid sequence, 144 residues long: MNEELQNQFMALDVYNQQVQKLQEELSNIDMMIMELLKSIESMEGLKTSKEILLPLGAGAFVNAQVQNPEKIVLSVGVDVLLEKDVDEVIVDFQKSVEELEQTKELVNTQIQKTNQEIVKLRSELEKRAAAIEQRSAQMKPRTN.

It belongs to the prefoldin alpha subunit family. In terms of assembly, heterohexamer of two alpha and four beta subunits.

The protein localises to the cytoplasm. Functionally, molecular chaperone capable of stabilizing a range of proteins. Seems to fulfill an ATP-independent, HSP70-like function in archaeal de novo protein folding. This is Prefoldin subunit alpha from Methanococcus maripaludis (strain C5 / ATCC BAA-1333).